Reading from the N-terminus, the 381-residue chain is MHILADENIPLVDEFFAGLGEIRRMPGRRINRAALEGVDVLLVRSVTRVDRELLQGTAVRFVGTCTIGTDHLDLDYFEQSGIDWASAPGCNARGVVDYVLGCLLALAEVRGEALARRRFGVVGAGEVGGRLVEVLRGLGWDVRVCDPPRQTREAGGFVTLDEVIAECDVISLHTPLSMSGDCPTFHLFDRQRLSGLRPGAWLINASRGAVVDNAALRDLLLQRPDLEAVLDVWEGEPQVDVELADLCRIATPHIAGYSLDGKLRGTAQIHAAYCAARGLEPTVELAQLMPGPALAGLTFAASAEPAEMLATLCRAVYDPRRDDADFRRSLQGDDAQRRAAFDLLRKAYPARREIDGLAVRIEGDNPALTAVVSALGARLLR.

Residues serine 45 and threonine 66 each contribute to the substrate site. NAD(+)-binding positions include aspartate 146, threonine 174, 205 to 207, and aspartate 231; that span reads ASR. Residue arginine 207 is part of the active site. Glutamate 236 is an active-site residue. Residue histidine 253 is the Proton donor of the active site. Glycine 256 contributes to the NAD(+) binding site. Position 257 (tyrosine 257) interacts with substrate.

It belongs to the D-isomer specific 2-hydroxyacid dehydrogenase family. PdxB subfamily. As to quaternary structure, homodimer.

It is found in the cytoplasm. It catalyses the reaction 4-phospho-D-erythronate + NAD(+) = (R)-3-hydroxy-2-oxo-4-phosphooxybutanoate + NADH + H(+). Its pathway is cofactor biosynthesis; pyridoxine 5'-phosphate biosynthesis; pyridoxine 5'-phosphate from D-erythrose 4-phosphate: step 2/5. Catalyzes the oxidation of erythronate-4-phosphate to 3-hydroxy-2-oxo-4-phosphonooxybutanoate. The chain is Erythronate-4-phosphate dehydrogenase from Stutzerimonas stutzeri (strain A1501) (Pseudomonas stutzeri).